A 95-amino-acid chain; its full sequence is MTITKAKIAAMLSSKLGFSNNLCEEIVHTVFSNILEIAKEQKLTLKNFGSFEVKQKNPRPGINFHTKAPVIIESKKHLRFVPSSKLKALINESTR.

It belongs to the bacterial histone-like protein family.

The protein is Histone-like DNA-binding protein of Rickettsia conorii (strain ATCC VR-613 / Malish 7).